Reading from the N-terminus, the 938-residue chain is Isoleucine--tRNA ligase (938 aa).

The 'HIGH' region signature appears at 65–75 (PYANGSIHIGH). Glutamate 568 is a binding site for L-isoleucyl-5'-AMP. Residues 609–613 (KMSKS) carry the 'KMSKS' region motif. Residue lysine 612 participates in ATP binding. Zn(2+) contacts are provided by cysteine 905, cysteine 908, cysteine 921, and cysteine 924.

Belongs to the class-I aminoacyl-tRNA synthetase family. IleS type 1 subfamily. Monomer. The cofactor is Zn(2+).

Its subcellular location is the cytoplasm. It carries out the reaction tRNA(Ile) + L-isoleucine + ATP = L-isoleucyl-tRNA(Ile) + AMP + diphosphate. Its function is as follows. Catalyzes the attachment of isoleucine to tRNA(Ile). As IleRS can inadvertently accommodate and process structurally similar amino acids such as valine, to avoid such errors it has two additional distinct tRNA(Ile)-dependent editing activities. One activity is designated as 'pretransfer' editing and involves the hydrolysis of activated Val-AMP. The other activity is designated 'posttransfer' editing and involves deacylation of mischarged Val-tRNA(Ile). This is Isoleucine--tRNA ligase from Mannheimia succiniciproducens (strain KCTC 0769BP / MBEL55E).